A 237-amino-acid chain; its full sequence is MSDVTTAEFNEEGKYLRKVRSFVLREGRLTKGQAQAMEQQWPSMGLDYTPEAIDLVEVFGREADTVLEIGFGMGGSLVEMAKASPELNFIGIEVHKPGVGACLSVAAEAGVTNLRVYHHDALEVLENSIAEGSLARVQLFFPDPWHKKRHHKRRIVQAPFAELIRSKLKVGGVFHLATDWENYSEHMLEVMTAAPGYKNQSATGDVVERPEHRPLTKFEARGHRLGHGVWDLMFERV.

Positions 68, 93, 120, and 143 each coordinate S-adenosyl-L-methionine. Aspartate 143 is a catalytic residue. Residues lysine 147, aspartate 179, and 216–219 (TKFE) each bind substrate.

The protein belongs to the class I-like SAM-binding methyltransferase superfamily. TrmB family.

It carries out the reaction guanosine(46) in tRNA + S-adenosyl-L-methionine = N(7)-methylguanosine(46) in tRNA + S-adenosyl-L-homocysteine. Its pathway is tRNA modification; N(7)-methylguanine-tRNA biosynthesis. In terms of biological role, catalyzes the formation of N(7)-methylguanine at position 46 (m7G46) in tRNA. The sequence is that of tRNA (guanine-N(7)-)-methyltransferase from Shewanella piezotolerans (strain WP3 / JCM 13877).